The sequence spans 207 residues: p-benzoquinone reductase (207 aa).

The Flavodoxin-like domain maps to Ile-5–Val-196. FMN-binding positions include Ser-11–Ile-16, Thr-84–Phe-86, Ser-119–Gly-125, and His-140. Tyr-13 lines the NADP(+) pocket.

The protein belongs to the WrbA family. As to quaternary structure, homodimer. The cofactor is FMN.

The enzyme catalyses 1,4-benzoquinone + NADPH + H(+) = hydroquinone + NADP(+). The protein operates within xenobiotic degradation; 4-nitrophenol degradation. Functionally, involved in the degradation of para-nitrophenol (PNP). Catalyzes the reduction of p-benzoquinone to hydroquinone. The protein is p-benzoquinone reductase (pnpB) of Pseudomonas sp. (strain WBC-3).